We begin with the raw amino-acid sequence, 257 residues long: Deoxyribose-phosphate aldolase (257 aa).

Asp-102 acts as the Proton donor/acceptor in catalysis. The active-site Schiff-base intermediate with acetaldehyde is Lys-166. The Proton donor/acceptor role is filled by Lys-198.

This sequence belongs to the DeoC/FbaB aldolase family. DeoC type 2 subfamily.

Its subcellular location is the cytoplasm. It carries out the reaction 2-deoxy-D-ribose 5-phosphate = D-glyceraldehyde 3-phosphate + acetaldehyde. The protein operates within carbohydrate degradation; 2-deoxy-D-ribose 1-phosphate degradation; D-glyceraldehyde 3-phosphate and acetaldehyde from 2-deoxy-alpha-D-ribose 1-phosphate: step 2/2. Catalyzes a reversible aldol reaction between acetaldehyde and D-glyceraldehyde 3-phosphate to generate 2-deoxy-D-ribose 5-phosphate. This chain is Deoxyribose-phosphate aldolase, found in Aeromonas hydrophila subsp. hydrophila (strain ATCC 7966 / DSM 30187 / BCRC 13018 / CCUG 14551 / JCM 1027 / KCTC 2358 / NCIMB 9240 / NCTC 8049).